Consider the following 243-residue polypeptide: E3 ubiquitin-protein ligase RMA3 (243 aa).

The RING-type zinc-finger motif lies at 44 to 92 (CNICLDTAHDPVVTLCGHLFCWPCIYKWLHVQLSSVSVDQHQNNCPVCK). The segment at 110–135 (SPSSTFGSKKQDALSTDIPRRPAPSA) is disordered. A helical; Anchor for type IV membrane protein transmembrane segment spans residues 223-243 (KSLNRVSIFFLCCIILCLLLF).

As to expression, ubiquitous. Highly expressed in roots.

Its subcellular location is the endoplasmic reticulum membrane. The enzyme catalyses S-ubiquitinyl-[E2 ubiquitin-conjugating enzyme]-L-cysteine + [acceptor protein]-L-lysine = [E2 ubiquitin-conjugating enzyme]-L-cysteine + N(6)-ubiquitinyl-[acceptor protein]-L-lysine.. The protein operates within protein modification; protein ubiquitination. Functionally, E3 ubiquitin-protein ligase. This chain is E3 ubiquitin-protein ligase RMA3 (RMA3), found in Arabidopsis thaliana (Mouse-ear cress).